The chain runs to 357 residues: Probable xyloglucan endotransglucosylase/hydrolase protein 29 (357 aa).

An N-terminal signal peptide occupies residues 1–31 (MRDSIYLLWIDNRLVVIIMMVMMVSCRCVLG). The GH16 domain occupies 32-232 (LENINPIFFD…YTFSPFVSEF (201 aa)). E117 serves as the catalytic Nucleophile. E121 acts as the Proton donor in catalysis. Residues E121 and 134–136 (QTN) contribute to the xyloglucan site. N-linked (GlcNAc...) asparagine glycosylation occurs at N140. Xyloglucan is bound by residues 144–148 (NRGRE), 211–212 (SW), and G216. 2 N-linked (GlcNAc...) asparagine glycosylation sites follow: N241 and N262. A disulfide bridge links C299 with C312. R304 contacts xyloglucan. Positions 326–357 (GRLKFGGSHPKVHKARKKRRRNRSTPVVSADL) are disordered. Residues 335-348 (PKVHKARKKRRRNR) show a composition bias toward basic residues. An N-linked (GlcNAc...) asparagine glycan is attached at N347.

Belongs to the glycosyl hydrolase 16 family. XTH group 3 subfamily. Contains at least one intrachain disulfide bond essential for its enzymatic activity.

It localises to the secreted. It is found in the cell wall. The protein resides in the extracellular space. The protein localises to the apoplast. The enzyme catalyses breaks a beta-(1-&gt;4) bond in the backbone of a xyloglucan and transfers the xyloglucanyl segment on to O-4 of the non-reducing terminal glucose residue of an acceptor, which can be a xyloglucan or an oligosaccharide of xyloglucan.. Functionally, catalyzes xyloglucan endohydrolysis (XEH) and/or endotransglycosylation (XET). Cleaves and religates xyloglucan polymers, an essential constituent of the primary cell wall, and thereby participates in cell wall construction of growing tissues. The protein is Probable xyloglucan endotransglucosylase/hydrolase protein 29 (XTH29) of Arabidopsis thaliana (Mouse-ear cress).